The primary structure comprises 77 residues: Apelin (77 aa).

Residues 1–22 (MNVKILTLVIVLVVSLLCSASA) form the signal peptide. A disordered region spans residues 21–77 (SAGPMASTEHSKEIEEVGSMRTPLRQNPARAGRSQRPAGWRRRRPRPRLSHKGPMPF). Over residues 59–71 (GWRRRRPRPRLSH) the composition is skewed to basic residues.

This sequence belongs to the apelin family.

It is found in the secreted. The protein localises to the extracellular space. Functionally, peptide hormone that functions as endogenous ligand for the G-protein-coupled apelin receptor (aplnra and/or aplnrb), that plays a role in cadiovascular homeostasis. Functions as a balanced agonist activating both G(i) protein pathway and beta-arrestin pathway of APLNR. Downstream G proteins activation, apelin can inhibit cAMP production and activate key intracellular effectors such as ERKs. On the other hand, APLNR activation induces beta-arrestin recruitment to the membrane leading to desensitization and internalization of the receptor. Apelin blunts cardiac hypertrophic induction from APLNR on response to pathological stimuli, but also induces myocardial hypertrophy under normal conditions. Involved in the regulation of cardiac precursor cell movements during gastrulation and heart morphogenesis. Plays a role in early coronary blood vessels formation. Mediates myocardial contractility in an ERK1/2-dependent manner. May also have a role in the central control of body fluid homeostasis. This chain is Apelin, found in Danio rerio (Zebrafish).